The following is a 682-amino-acid chain: Potassium-transporting ATPase ATP-binding subunit (682 aa).

A run of 4 helical transmembrane segments spans residues 34-54, 62-82, 219-239, and 254-274; these read PVMF…IAMA, ALFS…ANFA, IALT…TATL, and VLVA…LSAI. Residue Asp307 is the 4-aspartylphosphate intermediate of the active site. ATP is bound by residues Asp344, Glu348, 377-384, and Lys395; that span reads FTAQSRMS. Mg(2+) contacts are provided by Asp518 and Asp522. 3 helical membrane-spanning segments follow: residues 588 to 608, 616 to 636, and 656 to 676; these read FAII…LNIM, AILS…PLAL, and IYGL…DLLL.

It belongs to the cation transport ATPase (P-type) (TC 3.A.3) family. Type IA subfamily. The system is composed of three essential subunits: KdpA, KdpB and KdpC.

The protein localises to the cell inner membrane. It carries out the reaction K(+)(out) + ATP + H2O = K(+)(in) + ADP + phosphate + H(+). Part of the high-affinity ATP-driven potassium transport (or Kdp) system, which catalyzes the hydrolysis of ATP coupled with the electrogenic transport of potassium into the cytoplasm. This subunit is responsible for energy coupling to the transport system and for the release of the potassium ions to the cytoplasm. This chain is Potassium-transporting ATPase ATP-binding subunit, found in Shigella boydii serotype 18 (strain CDC 3083-94 / BS512).